A 92-amino-acid chain; its full sequence is Small ribosomal subunit protein uS19 (92 aa).

Belongs to the universal ribosomal protein uS19 family.

In terms of biological role, protein S19 forms a complex with S13 that binds strongly to the 16S ribosomal RNA. The sequence is that of Small ribosomal subunit protein uS19 from Bartonella henselae (strain ATCC 49882 / DSM 28221 / CCUG 30454 / Houston 1) (Rochalimaea henselae).